The chain runs to 1304 residues: Splicing factor 3B subunit 1 (1304 aa).

Disordered stretches follow at residues 100-119 (QYDP…EDEY) and 124-148 (RTMI…PKMN). Over residues 104–119 (FAEHRPPKIADREDEY) the composition is skewed to basic and acidic residues. Thr-125 is subject to Phosphothreonine. Phosphoserine is present on Ser-129. Lys-141 carries the post-translational modification N6-acetyllysine. At Thr-142 the chain carries Phosphothreonine. Arg-157 carries the post-translational modification Citrulline. The interval 172–360 (LAEKAKAGEL…PVLTPGKTPI (189 aa)) is disordered. Residue Ser-194 is modified to Phosphoserine. A phosphothreonine mark is found at Thr-203, Thr-207, and Thr-211. Lys-214 carries the post-translational modification N6-acetyllysine; alternate. Lys-214 participates in a covalent cross-link: Glycyl lysine isopeptide (Lys-Gly) (interchain with G-Cter in SUMO2); alternate. Phosphothreonine occurs at positions 223 and 227. The interval 223-491 (TPGHTPSLRW…VDESTLSPEE (269 aa)) is interaction with PPP1R8. At Ser-229 the chain carries Phosphoserine. Residues 231-241 (RWDETPGRAKG) show a composition bias toward basic and acidic residues. 8 positions are modified to phosphothreonine: Thr-235, Thr-244, Thr-248, Thr-257, Thr-261, Thr-267, Thr-273, and Thr-278. Position 287 is a phosphoserine (Ser-287). Basic and acidic residues predominate over residues 291–304 (NRWDETPKTERDTP). 4 positions are modified to phosphothreonine: Thr-296, Thr-299, Thr-303, and Thr-313. Ser-322 bears the Phosphoserine mark. Residues Thr-326 and Thr-328 each carry the phosphothreonine modification. Ser-332 carries the post-translational modification Phosphoserine. Thr-341 is subject to Phosphothreonine. Residues 342 to 352 (PASQMGGSTPV) are compositionally biased toward polar residues. Phosphoserine occurs at positions 344 and 349. Thr-350 and Thr-354 each carry phosphothreonine. Phosphoserine is present on Ser-400. A Glycyl lysine isopeptide (Lys-Gly) (interchain with G-Cter in SUMO2); alternate cross-link involves residue Lys-413. A Glycyl lysine isopeptide (Lys-Gly) (interchain with G-Cter in SUMO1); alternate cross-link involves residue Lys-413. Thr-426 is subject to Phosphothreonine. A Glycyl lysine isopeptide (Lys-Gly) (interchain with G-Cter in SUMO2) cross-link involves residue Lys-430. Thr-434 is modified (phosphothreonine; by DYRK1A). Thr-436 carries the phosphothreonine modification. A Phosphoserine modification is found at Ser-488. 11 HEAT repeats span residues 529 to 568 (GPLF…DLVR), 569 to 603 (PYVH…LAKA), 604 to 641 (AGLA…ALGI), 643 to 677 (SLLP…LMGC), 680 to 718 (LPHL…AATP), 763 to 801 (NYYT…TDGV), 843 to 881 (KVGA…NLGA), 1010 to 1048 (TPPI…RGAE), 1052 to 1090 (AREW…AIGP), 1122 to 1160 (TCSP…YIGE), and 1163 to 1201 (KDYI…GVYG). The tract at residues 547–550 (QERH) is interaction with PHF5A. N6-acetyllysine occurs at positions 554 and 562. The interval 1156–1157 (EY) is interaction with PHF5A. Residues 1248 to 1304 (QYCLQGLFHPARKVRDVYWKIYNSIYIGSQDALIAHYPRIYNDDKNTYIRYDLDYIL) are interaction with SF3B3 and SF3B5.

This sequence belongs to the SF3B1 family. Component of the 17S U2 SnRNP complex, a ribonucleoprotein complex that contains small nuclear RNA (snRNA) U2 and a number of specific proteins. Part of the SF3B subcomplex of the 17S U2 SnRNP complex. SF3B associates with the splicing subcomplex SF3A and a 12S RNA unit to form the U2 small nuclear ribonucleoproteins complex (U2 snRNP). Within the SF3B complex, interacts directly (via HEAT domain) with SF3B3, SF3B5, SF3B6 and (via HEAT domain) with PHF5A. The SF3B subcomplex interacts with U2AF2. Identified in the spliceosome C complex. Component of the minor (U12-type spliceosome) spliceosome. Within the minor spliceosome complex, interacts with SCNM1 and CRIPT. Component of the B-WICH complex, at least composed of SMARCA5/SNF2H, BAZ1B/WSTF, SF3B1, DEK, MYO1C, ERCC6, MYBBP1A and DDX21. Phosphorylated form interacts with PPP1R8. Interacts with PQBP1. Interacts with RBM17. Interacts with RBM39. Interacts with SETX. Interacts with RBM15. Interacts with USH1G. Interacts with SDE2. Interacts with U2AF1. Interacts with CACTIN. Interacts with ZRSR1. Interacts with CYREN. Post-translationally, phosphorylated. Phosphorylation occurs concomitantly with the splicing catalytic steps. Phosphorylation on Thr-244, Thr-248 and Thr-313 by cyclin-dependent kinases promotes interaction with PPP1R8 during mitosis. Citrullinated by PADI4. Ubiquitous.

The protein localises to the nucleus. It localises to the nucleus speckle. Component of the 17S U2 SnRNP complex of the spliceosome, a large ribonucleoprotein complex that removes introns from transcribed pre-mRNAs. The 17S U2 SnRNP complex (1) directly participates in early spliceosome assembly and (2) mediates recognition of the intron branch site during pre-mRNA splicing by promoting the selection of the pre-mRNA branch-site adenosine, the nucleophile for the first step of splicing. Within the 17S U2 SnRNP complex, SF3B1 is part of the SF3B subcomplex, which is required for 'A' complex assembly formed by the stable binding of U2 snRNP to the branchpoint sequence in pre-mRNA. Sequence independent binding of SF3A and SF3B subcomplexes upstream of the branch site is essential, it may anchor U2 snRNP to the pre-mRNA. May also be involved in the assembly of the 'E' complex. Also acts as a component of the minor spliceosome, which is involved in the splicing of U12-type introns in pre-mRNAs. Together with other U2 snRNP complex components may also play a role in the selective processing of microRNAs (miRNAs) from the long primary miRNA transcript, pri-miR-17-92. The protein is Splicing factor 3B subunit 1 of Mus musculus (Mouse).